The following is a 364-amino-acid chain: PqqA peptide cyclase (364 aa).

Residues 6–222 form the Radical SAM core domain; sequence VGAPAGMLIE…HARTRYAGGP (217 aa). 3 residues coordinate [4Fe-4S] cluster: cysteine 20, cysteine 24, and cysteine 27.

This sequence belongs to the radical SAM superfamily. PqqE family. In terms of assembly, interacts with PqqD. The interaction is necessary for activity of PqqE. [4Fe-4S] cluster serves as cofactor.

The catalysed reaction is [PQQ precursor protein] + S-adenosyl-L-methionine = E-Y cross-linked-[PQQ precursor protein] + 5'-deoxyadenosine + L-methionine + H(+). Its pathway is cofactor biosynthesis; pyrroloquinoline quinone biosynthesis. Catalyzes the cross-linking of a glutamate residue and a tyrosine residue in the PqqA protein as part of the biosynthesis of pyrroloquinoline quinone (PQQ). This chain is PqqA peptide cyclase, found in Streptomyces rochei (Streptomyces parvullus).